The sequence spans 600 residues: Zinc finger and BTB domain-containing protein 46 (600 aa).

Residues Cys-31 to Ser-99 form the BTB domain. Residues Arg-173–Gly-222 are disordered. The span at Gly-197–Gly-207 shows a compositional bias: basic and acidic residues. Lys-229 participates in a covalent cross-link: Glycyl lysine isopeptide (Lys-Gly) (interchain with G-Cter in SUMO2). At Ser-234 the chain carries Phosphoserine. The segment at Pro-235–Thr-278 is disordered. The span at Leu-243–Gly-259 shows a compositional bias: polar residues. 2 consecutive C2H2-type zinc fingers follow at residues Phe-418 to His-436 and Tyr-446 to His-468. Residues Leu-513–Ser-600 form a disordered region. Residues Tyr-533–Asp-555 are compositionally biased toward acidic residues. 2 stretches are compositionally biased toward basic and acidic residues: residues Val-556–Asp-574 and Glu-591–Ser-600.

Post-translationally, sumoylated. Desumoylation by DESI1 reverses transcriptional repression activity.

The protein resides in the nucleus. Functions as a transcriptional repressor for PRDM1. This chain is Zinc finger and BTB domain-containing protein 46 (Zbtb46), found in Mus musculus (Mouse).